The primary structure comprises 182 residues: UPF0316 protein lp_1140 (182 aa).

3 helical membrane-spanning segments follow: residues 1 to 21 (MHIDMGMLVLIFIINFAYITL), 36 to 56 (FAAFASVIEITIYVLGLSLVL), and 62 to 82 (PINLVVYALGYGVGVYVGMVI).

Belongs to the UPF0316 family.

The protein resides in the cell membrane. In Lactiplantibacillus plantarum (strain ATCC BAA-793 / NCIMB 8826 / WCFS1) (Lactobacillus plantarum), this protein is UPF0316 protein lp_1140.